A 209-amino-acid polypeptide reads, in one-letter code: Uracil phosphoribosyltransferase (209 aa).

5-phospho-alpha-D-ribose 1-diphosphate contacts are provided by residues Arg-79, Arg-104, and 131-139 (DPMLATGGS). Uracil contacts are provided by residues Ile-194 and 199-201 (GDA). Asp-200 lines the 5-phospho-alpha-D-ribose 1-diphosphate pocket.

It belongs to the UPRTase family. Mg(2+) is required as a cofactor.

It carries out the reaction UMP + diphosphate = 5-phospho-alpha-D-ribose 1-diphosphate + uracil. The protein operates within pyrimidine metabolism; UMP biosynthesis via salvage pathway; UMP from uracil: step 1/1. With respect to regulation, allosterically activated by GTP. Catalyzes the conversion of uracil and 5-phospho-alpha-D-ribose 1-diphosphate (PRPP) to UMP and diphosphate. The polypeptide is Uracil phosphoribosyltransferase (Geobacter sulfurreducens (strain ATCC 51573 / DSM 12127 / PCA)).